Consider the following 809-residue polypeptide: Putative zinc metalloprotease TRE2 (809 aa).

2 stretches are compositionally biased toward polar residues: residues 1–12 (MRSSYQPVSTTN) and 20–30 (PTASSSHNLLM). A disordered region spans residues 1–66 (MRSSYQPVST…PSYEFDIEDP (66 aa)). Topologically, residues 1–125 (MRSSYQPVST…KIGNPFILRR (125 aa)) are cytoplasmic. A compositionally biased stretch (low complexity) spans 37–50 (SPPSSNDNSIETNI). The chain crosses the membrane as a helical; Signal-anchor for type II membrane protein span at residues 126-146 (FFYIIFMSFIAYYVLSSGYLF). Over 147 to 809 (NEKASGSKGM…VEETNDIGYK (663 aa)) the chain is Extracellular. N-linked (GlcNAc...) asparagine glycosylation is present at Asn228. The region spanning 255-349 (SNGKLSKVSL…STGDASGLNW (95 aa)) is the PA domain. Asn669 and Asn736 each carry an N-linked (GlcNAc...) asparagine glycan.

It belongs to the peptidase M28 family. M28B subfamily.

Its subcellular location is the membrane. The sequence is that of Putative zinc metalloprotease TRE2 (TRE2) from Saccharomyces cerevisiae (strain ATCC 204508 / S288c) (Baker's yeast).